Consider the following 69-residue polypeptide: Large ribosomal subunit protein bL31 (69 aa).

Positions 17, 19, 37, and 40 each coordinate Zn(2+).

It belongs to the bacterial ribosomal protein bL31 family. Type A subfamily. Part of the 50S ribosomal subunit. It depends on Zn(2+) as a cofactor.

Binds the 23S rRNA. The protein is Large ribosomal subunit protein bL31 of Clostridium botulinum (strain Eklund 17B / Type B).